The following is a 500-amino-acid chain: Glutamate--tRNA ligase (500 aa).

Positions 12-22 match the 'HIGH' region motif; sequence PSPTGHLHIGN. A 'KMSKS' region motif is present at residues 259–263; the sequence is KLSKR. ATP is bound at residue Lys262.

This sequence belongs to the class-I aminoacyl-tRNA synthetase family. Glutamate--tRNA ligase type 1 subfamily. As to quaternary structure, monomer.

Its subcellular location is the cytoplasm. It catalyses the reaction tRNA(Glu) + L-glutamate + ATP = L-glutamyl-tRNA(Glu) + AMP + diphosphate. Its function is as follows. Catalyzes the attachment of glutamate to tRNA(Glu) in a two-step reaction: glutamate is first activated by ATP to form Glu-AMP and then transferred to the acceptor end of tRNA(Glu). The sequence is that of Glutamate--tRNA ligase from Lactobacillus delbrueckii subsp. bulgaricus (strain ATCC 11842 / DSM 20081 / BCRC 10696 / JCM 1002 / NBRC 13953 / NCIMB 11778 / NCTC 12712 / WDCM 00102 / Lb 14).